A 210-amino-acid chain; its full sequence is Thymidylate kinase (210 aa).

Position 10–17 (10–17 (GLEGAGKS)) interacts with ATP.

It belongs to the thymidylate kinase family.

The catalysed reaction is dTMP + ATP = dTDP + ADP. Phosphorylation of dTMP to form dTDP in both de novo and salvage pathways of dTTP synthesis. The sequence is that of Thymidylate kinase (tmk) from Haemophilus influenzae (strain ATCC 51907 / DSM 11121 / KW20 / Rd).